A 295-amino-acid polypeptide reads, in one-letter code: uncharacterized protein (295 aa).

The region spanning 2–226 (LSIESLCKSY…QQTNVFTLSV (225 aa)) is the ABC transporter domain. Residue 34 to 41 (GPNGAGKT) coordinates ATP.

The protein belongs to the ABC transporter superfamily.

This is an uncharacterized protein from Bacillus subtilis (strain 168).